Consider the following 622-residue polypeptide: Apical membrane antigen 1 (622 aa).

Residues 1 to 24 form the signal peptide; that stretch reads MRKLYCVLLLSAFEFTYMINFGRG. The Extracellular portion of the chain corresponds to 25-546; it reads QNYWEHPYQK…EHKPTYDKMK (522 aa). 5 disulfides stabilise this stretch: C149/C302, C217/C247, C263/C275, C320/C418, and C337/C409. Residue N162 is glycosylated (N-linked (GlcNAc...) asparagine). Residues N286, N371, N421, N422, and N499 are each glycosylated (N-linked (GlcNAc...) asparagine). Cystine bridges form between C443-C502, C490-C507, and C492-C509. A helical transmembrane segment spans residues 547–567; it reads IIIASSAAVAVLATILMVYLY. Over 568–622 the chain is Cytoplasmic; sequence KRKGNAEKYDKMDEPQDYGKSNSRNDEMLDPEASFWGEEKRASHTTPVLMEKPYY. The segment at 577–607 is disordered; that stretch reads DKMDEPQDYGKSNSRNDEMLDPEASFWGEEK.

This sequence belongs to the apicomplexan parasites AMA1 family.

The protein localises to the membrane. In terms of biological role, involved in parasite invasion of erythrocytes. The polypeptide is Apical membrane antigen 1 (AMA-1) (Plasmodium falciparum (isolate 7G8)).